A 396-amino-acid polypeptide reads, in one-letter code: MAVQESAVQLSMTLKVQEYPTLKVPYETLNKRFRAAQKNIDRETSHVTMVVAELEKTLSGCPAVDSVVSLLDGVVEKLSVLKRKAVESIQAEDESAKLCKRRIEHLKEHSSDQPAAASVWKRKRMDRMMVEHLLRCGYYNTAVKLARQSGIEDLVNIEMFLTAKEVEESLERRETATCLAWCHDNKSRLRKMKSCLEFSLRIQEFIELIRQNKRLDAVRHARKHFSQAEGSQLDEVRQAMGMLAFPPDTHISPYKDLLDPARWRMLIQQFRYDNYRLHQLGNNSVFTLTLQAGLSAIKTPQCYKEDGSSKSPDCPVCSRSLNKLAQPLPMAHCANSRLVCKISGDVMNENNPPMMLPNGYVYGYNSLLSIRQDDKVVCPRTKEVFHFSQAEKVYIM.

Residues 1–124 are extracellular and involved in cell to cell contact; it reads MAVQESAVQL…AAASVWKRKR (124 aa). At Thr-28 the chain carries Phosphothreonine. The 33-residue stretch at 121-153 folds into the LisH domain; that stretch reads KRKRMDRMMVEHLLRCGYYNTAVKLARQSGIED. A CTLH domain is found at 159-216; the sequence is MFLTAKEVEESLERRETATCLAWCHDNKSRLRKMKSCLEFSLRIQEFIELIRQNKRLD. An RING-Gid-type zinc finger spans residues 314–381; that stretch reads CPVCSRSLNK…QDDKVVCPRT (68 aa).

In terms of assembly, identified in the CTLH complex that contains GID4, RANBP9 and/or RANBP10, MKLN1, MAEA, RMND5A (or alternatively its paralog RMND5B), GID8, ARMC8, WDR26 and YPEL5. Within this complex, MAEA, RMND5A (or alternatively its paralog RMND5B), GID8, WDR26, and RANBP9 and/or RANBP10 form the catalytic core, while GID4, MKLN1, ARMC8 and YPEL5 have ancillary roles. Interacts with F-actin. In terms of processing, autoubiquitinated as component of the CTLH E3 ubiquitin-protein ligase complex (in vitro).

It is found in the cytoplasm. The protein localises to the nucleus. It localises to the nucleoplasm. The protein resides in the nucleus matrix. Its subcellular location is the cell membrane. It is found in the cytoskeleton. It catalyses the reaction S-ubiquitinyl-[E2 ubiquitin-conjugating enzyme]-L-cysteine + [acceptor protein]-L-lysine = [E2 ubiquitin-conjugating enzyme]-L-cysteine + N(6)-ubiquitinyl-[acceptor protein]-L-lysine.. In terms of biological role, core component of the CTLH E3 ubiquitin-protein ligase complex that selectively accepts ubiquitin from UBE2H and mediates ubiquitination and subsequent proteasomal degradation of the transcription factor HBP1. MAEA and RMND5A are both required for catalytic activity of the CTLH E3 ubiquitin-protein ligase complex. MAEA is required for normal cell proliferation. The CTLH E3 ubiquitin-protein ligase complex is not required for the degradation of enzymes involved in gluconeogenesis, such as FBP1. Plays a role in erythroblast enucleation during erythrocyte maturation and in the development of mature macrophages. Mediates the attachment of erythroid cell to mature macrophages; this MAEA-mediated contact inhibits erythroid cell apoptosis. Participates in erythroblastic island formation, which is the functional unit of definitive erythropoiesis. Associates with F-actin to regulate actin distribution in erythroblasts and macrophages. May contribute to nuclear architecture and cells division events. This is E3 ubiquitin-protein transferase MAEA (MAEA) from Macaca fascicularis (Crab-eating macaque).